Consider the following 572-residue polypeptide: Methionine--tRNA ligase (572 aa).

The 'HIGH' region signature appears at 11–21; sequence PYINGIKHLGN. Positions 143, 146, 156, and 159 each coordinate Zn(2+). Positions 346–350 match the 'KMSKS' region motif; sequence QFSTS. Thr349 contacts ATP.

The protein belongs to the class-I aminoacyl-tRNA synthetase family. MetG type 1 subfamily. In terms of assembly, monomer. It depends on Zn(2+) as a cofactor.

It is found in the cytoplasm. The catalysed reaction is tRNA(Met) + L-methionine + ATP = L-methionyl-tRNA(Met) + AMP + diphosphate. Functionally, is required not only for elongation of protein synthesis but also for the initiation of all mRNA translation through initiator tRNA(fMet) aminoacylation. The chain is Methionine--tRNA ligase from Ruegeria pomeroyi (strain ATCC 700808 / DSM 15171 / DSS-3) (Silicibacter pomeroyi).